Consider the following 81-residue polypeptide: Omega-conotoxin-like 3 (81 aa).

The first 22 residues, 1-22, serve as a signal peptide directing secretion; sequence MKLTCMMIVAVLFLTASIFITA. A propeptide spanning residues 23-51 is cleaved from the precursor; sequence DNSRNGIENLPRMRRHEMKKPKASKLNKR. 3 disulfide bridges follow: cysteine 53-cysteine 71, cysteine 60-cysteine 75, and cysteine 70-cysteine 79.

Belongs to the conotoxin O1 superfamily. Expressed by the venom duct.

It is found in the secreted. In terms of biological role, omega-conotoxins act at presynaptic membranes, they bind and block voltage-gated calcium channels (Cav). In Conus imperialis (Imperial cone), this protein is Omega-conotoxin-like 3.